A 415-amino-acid polypeptide reads, in one-letter code: Thyroxine-binding globulin (415 aa).

A signal peptide spans 1-20; the sequence is MSPFLYLVLLVLGLHATIHC. N36 carries N-linked (GlcNAc...) (complex) asparagine glycosylation. N-linked (GlcNAc...) asparagine glycosylation occurs at N99. An N-linked (GlcNAc...) asparagine; in variant Gary glycan is attached at I116. Residues N165 and N253 are each glycosylated (N-linked (GlcNAc...) asparagine). 2 residues coordinate thyroxine: N293 and R398.

It belongs to the serpin family. As to expression, expressed by the liver and secreted in plasma.

It localises to the secreted. Functionally, major thyroid hormone transport protein in serum. In Homo sapiens (Human), this protein is Thyroxine-binding globulin (SERPINA7).